We begin with the raw amino-acid sequence, 90 residues long: Electron transfer flavoprotein regulatory factor 1 (90 aa).

The protein belongs to the complex I LYR family. Homotetramer. Interacts with NDUFAB1. Interacts with ETFA. Interacts with ETFB.

Its subcellular location is the mitochondrion. Its function is as follows. Acts as a regulator of the electron transfer flavoprotein by promoting the removal of flavin from the ETF holoenzyme (composed of ETFA and ETFB). This chain is Electron transfer flavoprotein regulatory factor 1, found in Homo sapiens (Human).